The chain runs to 257 residues: Phosphonates import ATP-binding protein PhnC (257 aa).

An ABC transporter domain is found at 4–248 (IEFKNVSKVY…VFSEIYGRTI (245 aa)). 37 to 44 (GLSGAGKS) contacts ATP.

The protein belongs to the ABC transporter superfamily. Phosphonates importer (TC 3.A.1.9.1) family. In terms of assembly, the complex is composed of two ATP-binding proteins (PhnC), two transmembrane proteins (PhnE) and a solute-binding protein (PhnD).

The protein localises to the cell membrane. It carries out the reaction phosphonate(out) + ATP + H2O = phosphonate(in) + ADP + phosphate + H(+). Part of the ABC transporter complex PhnCDE involved in phosphonates import. Responsible for energy coupling to the transport system. In Staphylococcus aureus (strain COL), this protein is Phosphonates import ATP-binding protein PhnC.